The sequence spans 715 residues: Epidermal growth factor receptor kinase substrate 8-like protein 2 (715 aa).

The PID domain maps to 46–202; that stretch reads MHETSQYHVQ…RQRQSILPPP (157 aa). Positions 183–243 are disordered; the sequence is QTLKGHQEKI…GFRRRESQEE (61 aa). The span at 199–208 shows a compositional bias: pro residues; that stretch reads LPPPQGPAPI. Composition is skewed to basic and acidic residues over residues 213–222 and 234–243; these read RGGDSPEAKN and GFRRRESQEE. Ser-240 is modified (phosphoserine). Thr-303 bears the Phosphothreonine mark. The tract at residues 448–487 is disordered; the sequence is VSPVSRQSIRNSQKHSPTSEPTPPGDALPPVSSPHTHRGY. The residue at position 449 (Ser-449) is a Phosphoserine. A compositionally biased stretch (polar residues) spans 451 to 466; the sequence is VSRQSIRNSQKHSPTS. Position 469 is a phosphothreonine (Thr-469). Residues 492–551 enclose the SH3 domain; the sequence is AMAKYVKILYDFTARNANELSVLKDEVLEVLEDGRQWWKLRSRSGQAGYVPCNILGEARP. At Ser-570 the chain carries Phosphoserine.

The protein belongs to the EPS8 family. As to quaternary structure, interacts with ABI1. Part of a complex that contains SOS1, ABI1 and EPS8L2. Associates with F-actin. In terms of tissue distribution, detected in fibroblasts and placenta.

Its subcellular location is the cytoplasm. It is found in the cell projection. The protein resides in the stereocilium. Its function is as follows. Stimulates guanine exchange activity of SOS1. May play a role in membrane ruffling and remodeling of the actin cytoskeleton. In the cochlea, is required for stereocilia maintenance in adult hair cells. The sequence is that of Epidermal growth factor receptor kinase substrate 8-like protein 2 (EPS8L2) from Homo sapiens (Human).